Reading from the N-terminus, the 236-residue chain is Uridylate kinase (236 aa).

10–13 (KLSG) serves as a coordination point for ATP. G52 is a binding site for UMP. ATP is bound by residues G53 and R57. UMP contacts are provided by residues D72 and 133-140 (TGNPFFTT). Residues T160, Y166, and D169 each contribute to the ATP site.

It belongs to the UMP kinase family. In terms of assembly, homohexamer.

It localises to the cytoplasm. The enzyme catalyses UMP + ATP = UDP + ADP. It functions in the pathway pyrimidine metabolism; CTP biosynthesis via de novo pathway; UDP from UMP (UMPK route): step 1/1. Its activity is regulated as follows. Inhibited by UTP. Catalyzes the reversible phosphorylation of UMP to UDP. This Bacteroides fragilis (strain ATCC 25285 / DSM 2151 / CCUG 4856 / JCM 11019 / LMG 10263 / NCTC 9343 / Onslow / VPI 2553 / EN-2) protein is Uridylate kinase.